An 89-amino-acid polypeptide reads, in one-letter code: uncharacterized protein (89 aa).

The helical transmembrane segment at 20–39 (SFAMTTYLNLFVKLLIFLYI) threads the bilayer.

It is found in the membrane. This is an uncharacterized protein from Escherichia coli (strain K12).